The chain runs to 361 residues: Deoxyribonuclease-2-beta (361 aa).

Positions 1–27 are cleaved as a signal peptide; sequence MKQKMMARLLRTSFALLFLGLFGVLGA. N-linked (GlcNAc...) asparagine glycosylation is found at N81, N103, N119, and N278.

This sequence belongs to the DNase II family. As to expression, highly expressed in the eye lens and in salivary gland. Detected at lower levels in lung, prostate and lymph node. Isoform 2 is lung specific.

It is found in the lysosome. It catalyses the reaction Endonucleolytic cleavage to nucleoside 3'-phosphates and 3'-phosphooligonucleotide end-products.. Functionally, hydrolyzes DNA under acidic conditions. Does not require divalent cations for activity. Participates in the degradation of nuclear DNA during lens cell differentiation. In Homo sapiens (Human), this protein is Deoxyribonuclease-2-beta (DNASE2B).